Here is a 222-residue protein sequence, read N- to C-terminus: Niacin transporter NiaX (222 aa).

A run of 5 helical transmembrane segments spans residues 34–54 (NLII…MMPV), 72–94 (MAAM…LGFM), 101–120 (TIWL…AYVL), 135–155 (IFNF…VYAF), and 167–187 (ALLN…MIDF).

This sequence belongs to the vitamin uptake transporter (VUT/ECF) (TC 2.A.88) family. In terms of assembly, in L.lactis forms a stable complex with EcfA, EcfA' and EcfT. In E.coli forms a stable energy-coupling factor (ECF) transporter complex composed of 2 membrane-embedded substrate-binding proteins (S component), 2 ATP-binding proteins (A and A' components) and 2 transmembrane proteins (T component), probably with a stoichiometry of 2:1:1:2. May be able to interact with more than 1 S component at a time.

It localises to the cell membrane. Functionally, probably a niacin-binding protein that interacts with the energy-coupling factor (ECF) ABC-transporter complex. Unlike classic ABC transporters this ECF transporter provides the energy necessary to transport a number of different substrates. The substrates themselves are bound by transmembrane, not extracytoplasmic soluble proteins. Uptake of niacin into proteosomes containing EcfA1A2T and Niax has been demonstrated. Uptake requires hydrolyzable Mg-ATP and is substrate-specific; NiaX-containing proteosomes did not transport riboflavin. In Lactococcus lactis subsp. cremoris (strain MG1363), this protein is Niacin transporter NiaX (niaX).